Here is a 339-residue protein sequence, read N- to C-terminus: Uracil nucleotide/cysteinyl leukotriene receptor (339 aa).

Topologically, residues Met1–Cys36 are extracellular. An N-linked (GlcNAc...) asparagine glycan is attached at Asn14. The helical transmembrane segment at Phe37–Ile57 threads the bilayer. At Trp58–Thr64 the chain is on the cytoplasmic side. Residues Pro65–Pro85 traverse the membrane as a helical segment. Over Thr86–Arg105 the chain is Extracellular. Residues Cys104 and Cys181 are joined by a disulfide bond. A helical membrane pass occupies residues Leu106–Ser126. The Cytoplasmic segment spans residues Ala127–Tyr147. The helical transmembrane segment at Ala148–Val168 threads the bilayer. Topologically, residues Ser169–Ala195 are extracellular. N-linked (GlcNAc...) asparagine glycosylation is present at Asn176. A helical membrane pass occupies residues Ser196 to Ile216. The Cytoplasmic portion of the chain corresponds to Arg217 to Lys232. A helical transmembrane segment spans residues Ala233–Ile253. The Extracellular portion of the chain corresponds to His254–Arg280. Residues Ile281–Ala301 form a helical membrane-spanning segment. The Cytoplasmic portion of the chain corresponds to Glu302–Leu339.

Belongs to the G-protein coupled receptor 1 family.

It localises to the cell membrane. Functionally, dual specificity receptor for uracil nucleotides and cysteinyl leukotrienes (CysLTs). Signals through G(i) and inhibition of adenylyl cyclase. May mediate brain damage by nucleotides and CysLTs following ischemia. This is Uracil nucleotide/cysteinyl leukotriene receptor from Mus musculus (Mouse).